Here is a 443-residue protein sequence, read N- to C-terminus: Ribulose bisphosphate carboxylase large chain (443 aa).

Position 7 is an N6,N6,N6-trimethyllysine (Lys-7). The substrate site is built by Asn-116 and Thr-166. Catalysis depends on Lys-168, which acts as the Proton acceptor. Position 170 (Lys-170) interacts with substrate. The Mg(2+) site is built by Lys-194, Asp-196, and Glu-197. Lys-194 is modified (N6-carboxylysine). His-287 serves as the catalytic Proton acceptor. Substrate contacts are provided by Arg-288, His-320, and Ser-372.

It belongs to the RuBisCO large chain family. Type I subfamily. Heterohexadecamer of 8 large chains and 8 small chains; disulfide-linked. The disulfide link is formed within the large subunit homodimers. The cofactor is Mg(2+). Post-translationally, the disulfide bond which can form in the large chain dimeric partners within the hexadecamer appears to be associated with oxidative stress and protein turnover.

It is found in the plastid. The protein resides in the chloroplast. It catalyses the reaction 2 (2R)-3-phosphoglycerate + 2 H(+) = D-ribulose 1,5-bisphosphate + CO2 + H2O. The enzyme catalyses D-ribulose 1,5-bisphosphate + O2 = 2-phosphoglycolate + (2R)-3-phosphoglycerate + 2 H(+). Its function is as follows. RuBisCO catalyzes two reactions: the carboxylation of D-ribulose 1,5-bisphosphate, the primary event in carbon dioxide fixation, as well as the oxidative fragmentation of the pentose substrate in the photorespiration process. Both reactions occur simultaneously and in competition at the same active site. The polypeptide is Ribulose bisphosphate carboxylase large chain (Abies sachalinensis (Sakhalin fir)).